Consider the following 388-residue polypeptide: Protein RecA (388 aa).

Residue 79–86 (GPESSGKT) participates in ATP binding. A disordered region spans residues 347-372 (IDGEEVSEQDTENKKDEPKKEEAVNE). Over residues 357 to 369 (TENKKDEPKKEEA) the composition is skewed to basic and acidic residues.

The protein belongs to the RecA family.

The protein localises to the cytoplasm. Functionally, can catalyze the hydrolysis of ATP in the presence of single-stranded DNA, the ATP-dependent uptake of single-stranded DNA by duplex DNA, and the ATP-dependent hybridization of homologous single-stranded DNAs. It interacts with LexA causing its activation and leading to its autocatalytic cleavage. In Streptococcus pneumoniae (strain CGSP14), this protein is Protein RecA.